The primary structure comprises 61 residues: MARYRHSRSRSRSRYRRRRRRRSRYRSRRRRYRGRRRRRSRRGRRRRGYSRRRYSRRRRRY.

Residues M1–Y61 form a disordered region.

It belongs to the protamine P1 family. As to expression, testis.

The protein localises to the nucleus. The protein resides in the chromosome. Protamines substitute for histones in the chromatin of sperm during the haploid phase of spermatogenesis. They compact sperm DNA into a highly condensed, stable and inactive complex. This chain is Sperm protamine P1 (PRM1), found in Macropus giganteus (Eastern gray kangaroo).